The chain runs to 487 residues: L-tartrate/succinate antiporter (487 aa).

14 helical membrane-spanning segments follow: residues 10-30, 33-53, 54-74, 93-113, 137-157, 189-209, 236-256, 292-312, 313-333, 340-360, 370-390, 393-413, 418-438, and 465-485; these read YLAP…AGLE, TWLY…EPVP, GAVV…WLLF, WAVS…FMFG, TLFL…VTPS, IGSY…AIFL, FLGM…LAYV, LMVG…AAMV, GYSV…DIVS, VFFW…TGFI, SLSG…FYLL, FFAS…AAAL, IPLP…SILT, and IFGL…MPVV.

It belongs to the SLC13A/DASS transporter (TC 2.A.47) family. DIT1 subfamily.

The protein localises to the cell inner membrane. It carries out the reaction (2R,3R)-tartrate(out) + succinate(in) = (2R,3R)-tartrate(in) + succinate(out). Functionally, catalyzes the uptake of tartrate in exchange for intracellular succinate. Essential for anaerobic L-tartrate fermentation. The protein is L-tartrate/succinate antiporter (ttdT) of Escherichia coli O6:K15:H31 (strain 536 / UPEC).